The chain runs to 307 residues: Putative serpin A13 (307 aa).

The first 21 residues, 1-21 (MEASRWWLLVTVLMAGAHCVA), serve as a signal peptide directing secretion. Residues N150 and N250 are each glycosylated (N-linked (GlcNAc...) asparagine).

This sequence belongs to the serpin family.

The protein resides in the secreted. The chain is Putative serpin A13 (SERPINA13P) from Homo sapiens (Human).